A 1465-amino-acid polypeptide reads, in one-letter code: DNA polymerase III PolC-type (1465 aa).

Residues 425–581 (YVVFDVETTG…YDAEATGRLL (157 aa)) form the Exonuclease domain.

The protein belongs to the DNA polymerase type-C family. PolC subfamily.

The protein localises to the cytoplasm. The catalysed reaction is DNA(n) + a 2'-deoxyribonucleoside 5'-triphosphate = DNA(n+1) + diphosphate. Its function is as follows. Required for replicative DNA synthesis. This DNA polymerase also exhibits 3' to 5' exonuclease activity. The protein is DNA polymerase III PolC-type of Streptococcus mutans serotype c (strain ATCC 700610 / UA159).